Here is a 368-residue protein sequence, read N- to C-terminus: tRNA 2-selenouridine synthase (368 aa).

The Rhodanese domain occupies 12-136 (FLGDAPLLDT…MRGFLLETIE (125 aa)). Residue C95 is the S-selanylcysteine intermediate of the active site.

The protein belongs to the SelU family. In terms of assembly, monomer.

The catalysed reaction is 5-methylaminomethyl-2-thiouridine(34) in tRNA + selenophosphate + (2E)-geranyl diphosphate + H2O + H(+) = 5-methylaminomethyl-2-selenouridine(34) in tRNA + (2E)-thiogeraniol + phosphate + diphosphate. It carries out the reaction 5-methylaminomethyl-2-thiouridine(34) in tRNA + (2E)-geranyl diphosphate = 5-methylaminomethyl-S-(2E)-geranyl-thiouridine(34) in tRNA + diphosphate. It catalyses the reaction 5-methylaminomethyl-S-(2E)-geranyl-thiouridine(34) in tRNA + selenophosphate + H(+) = 5-methylaminomethyl-2-(Se-phospho)selenouridine(34) in tRNA + (2E)-thiogeraniol. The enzyme catalyses 5-methylaminomethyl-2-(Se-phospho)selenouridine(34) in tRNA + H2O = 5-methylaminomethyl-2-selenouridine(34) in tRNA + phosphate. Its function is as follows. Involved in the post-transcriptional modification of the uridine at the wobble position (U34) of tRNA(Lys), tRNA(Glu) and tRNA(Gln). Catalyzes the conversion of 2-thiouridine (S2U-RNA) to 2-selenouridine (Se2U-RNA). Acts in a two-step process involving geranylation of 2-thiouridine (S2U) to S-geranyl-2-thiouridine (geS2U) and subsequent selenation of the latter derivative to 2-selenouridine (Se2U) in the tRNA chain. The chain is tRNA 2-selenouridine synthase from Bordetella bronchiseptica (strain ATCC BAA-588 / NCTC 13252 / RB50) (Alcaligenes bronchisepticus).